The sequence spans 649 residues: tRNA-guanine(15) transglycosylase (649 aa).

Asp88 acts as the Nucleophile in catalysis. The substrate site is built by Asp123 and Ala194. Zn(2+) contacts are provided by Cys280, Cys282, and Cys285. Positions 572-647 constitute a PUA domain; that stretch reads KYRVIVDKSV…VAVNIRGGLK (76 aa).

It belongs to the archaeosine tRNA-ribosyltransferase family. Zn(2+) serves as cofactor.

The enzyme catalyses guanosine(15) in tRNA + 7-cyano-7-deazaguanine = 7-cyano-7-carbaguanosine(15) in tRNA + guanine. The protein operates within tRNA modification; archaeosine-tRNA biosynthesis. Functionally, exchanges the guanine residue with 7-cyano-7-deazaguanine (preQ0) at position 15 in the dihydrouridine loop (D-loop) of archaeal tRNAs. This is tRNA-guanine(15) transglycosylase from Methanococcus vannielii (strain ATCC 35089 / DSM 1224 / JCM 13029 / OCM 148 / SB).